We begin with the raw amino-acid sequence, 1222 residues long: A disintegrin and metalloproteinase with thrombospondin motifs 16 (1222 aa).

An N-terminal signal peptide occupies residues 1 to 20 (MESRGCAALWVLLLAQVSEQ). Positions 21–277 (QTPACALGLA…EYKPSSRHKR (257 aa)) are excised as a propeptide. Residues Asn-154 and Asn-190 are each glycosylated (N-linked (GlcNAc...) asparagine). The short motif at 245-253 (HFCGRRKKY) is the Cysteine switch element. Cys-247 contributes to the Zn(2+) binding site. The Peptidase M12B domain occupies 288–493 (LNVETLVVVD…AQAICLADQP (206 aa)). Asn-308 carries an N-linked (GlcNAc...) asparagine glycan. 11 disulfides stabilise this stretch: Cys-364-Cys-415, Cys-390-Cys-397, Cys-409-Cys-488, Cys-448-Cys-472, Cys-516-Cys-541, Cys-527-Cys-548, Cys-536-Cys-567, Cys-561-Cys-572, Cys-596-Cys-633, Cys-600-Cys-638, and Cys-611-Cys-623. His-431 is a Zn(2+) binding site. Glu-432 is a catalytic residue. Zn(2+) contacts are provided by His-435 and His-441. The region spanning 494 to 583 (KPVKEYKYPE…KYGDEGPKPT (90 aa)) is the Disintegrin domain. Positions 584–639 (HGHWSDWSPWSPCSRTCGGGISHRDRLCTNPRPSHGGKFCQGSTRTLKLCNSQRCP) constitute a TSP type-1 1 domain. N-linked (GlcNAc...) asparagine glycans are attached at residues Asn-739, Asn-778, Asn-825, Asn-833, Asn-903, and Asn-933. Residues 745 to 871 (THRGLYSKHH…KTPAAQPSYS (127 aa)) form a spacer region. TSP type-1 domains follow at residues 872–920 (WAIV…LVPC), 925–985 (CPSS…QSCP), 986–1046 (PAWS…KRCH), 1049–1113 (KKLQ…IPCP), and 1125–1179 (RGSW…HFCP). The region spanning 1184–1221 (RGTFCKDLFHWCYLVPQHGMCGHRFYSKQCCNTCSKSN) is the PLAC domain.

It depends on Zn(2+) as a cofactor. In terms of processing, the precursor is cleaved by a furin endopeptidase. Glycosylated. Can be O-fucosylated by POFUT2 on a serine or a threonine residue found within the consensus sequence C1-X(2)-(S/T)-C2-G of the TSP type-1 repeat domains where C1 and C2 are the first and second cysteine residue of the repeat, respectively. Fucosylated repeats can then be further glycosylated by the addition of a beta-1,3-glucose residue by the glucosyltransferase, B3GALTL. Fucosylation mediates the efficient secretion of ADAMTS family members. Can also be C-glycosylated with one or two mannose molecules on tryptophan residues within the consensus sequence W-X-X-W of the TPRs, and N-glycosylated. These other glycosylations can also facilitate secretion.

It localises to the secreted. The protein localises to the extracellular space. Its subcellular location is the extracellular matrix. This is A disintegrin and metalloproteinase with thrombospondin motifs 16 (Adamts16) from Mus musculus (Mouse).